Here is a 2376-residue protein sequence, read N- to C-terminus: MAG2-interacting protein 2 (2376 aa).

As to quaternary structure, forms a complex with MAG2, ZW10/MIP1 and MIP3 on the endoplasmic reticulum.

It is found in the endoplasmic reticulum membrane. Its function is as follows. Required for proper maturation of seed storage proteins. Forms a complex with MAG2, ZW10/MIP1 and MIP3 on the endoplasmic reticulum that may be responsible for efficient transport of seed storage proteins. The chain is MAG2-interacting protein 2 from Arabidopsis thaliana (Mouse-ear cress).